The chain runs to 115 residues: Aspartate 1-decarboxylase (115 aa).

The active-site Schiff-base intermediate with substrate; via pyruvic acid is Ser-25. Ser-25 carries the post-translational modification Pyruvic acid (Ser). A substrate-binding site is contributed by Thr-57. Catalysis depends on Tyr-58, which acts as the Proton donor. 71–73 (GAA) serves as a coordination point for substrate.

The protein belongs to the PanD family. Heterooctamer of four alpha and four beta subunits. Pyruvate is required as a cofactor. In terms of processing, is synthesized initially as an inactive proenzyme, which is activated by self-cleavage at a specific serine bond to produce a beta-subunit with a hydroxyl group at its C-terminus and an alpha-subunit with a pyruvoyl group at its N-terminus.

Its subcellular location is the cytoplasm. The catalysed reaction is L-aspartate + H(+) = beta-alanine + CO2. Its pathway is cofactor biosynthesis; (R)-pantothenate biosynthesis; beta-alanine from L-aspartate: step 1/1. Functionally, catalyzes the pyruvoyl-dependent decarboxylation of aspartate to produce beta-alanine. This is Aspartate 1-decarboxylase from Campylobacter concisus (strain 13826).